Reading from the N-terminus, the 125-residue chain is MATVNQLVRKGRTKRTAKSSVPALEACPQKRGVCTRVYTTTPKKPNSALRKVARVRLTNSYEVASYIGGEGHNLQEHSVVLIRGGRVKDLPGVRYHVVRGAADTAGVDKRRQGRSKYGAKRPKKK.

Residues 1–23 are disordered; sequence MATVNQLVRKGRTKRTAKSSVPA. Position 89 is a 3-methylthioaspartic acid (D89). A disordered region spans residues 102 to 125; it reads ADTAGVDKRRQGRSKYGAKRPKKK. Residues 111 to 125 show a composition bias toward basic residues; the sequence is RQGRSKYGAKRPKKK.

It belongs to the universal ribosomal protein uS12 family. As to quaternary structure, part of the 30S ribosomal subunit. Contacts proteins S8 and S17. May interact with IF1 in the 30S initiation complex.

In terms of biological role, with S4 and S5 plays an important role in translational accuracy. Functionally, interacts with and stabilizes bases of the 16S rRNA that are involved in tRNA selection in the A site and with the mRNA backbone. Located at the interface of the 30S and 50S subunits, it traverses the body of the 30S subunit contacting proteins on the other side and probably holding the rRNA structure together. The combined cluster of proteins S8, S12 and S17 appears to hold together the shoulder and platform of the 30S subunit. The protein is Small ribosomal subunit protein uS12 of Halorhodospira halophila (strain DSM 244 / SL1) (Ectothiorhodospira halophila (strain DSM 244 / SL1)).